A 307-amino-acid polypeptide reads, in one-letter code: Sesquiterpene synthase-like protein Agr10 (307 aa).

Positions 287 to 307 (GRYFGDRGPENQSDIPTSSNR) are disordered. Positions 296 to 307 (ENQSDIPTSSNR) are enriched in polar residues.

This sequence belongs to the terpene synthase family.

This is Sesquiterpene synthase-like protein Agr10 from Cyclocybe aegerita (Black poplar mushroom).